The following is a 336-amino-acid chain: Aspartate--ammonia ligase (336 aa).

The protein belongs to the class-II aminoacyl-tRNA synthetase family. AsnA subfamily.

Its subcellular location is the cytoplasm. It catalyses the reaction L-aspartate + NH4(+) + ATP = L-asparagine + AMP + diphosphate + H(+). Its pathway is amino-acid biosynthesis; L-asparagine biosynthesis; L-asparagine from L-aspartate (ammonia route): step 1/1. The chain is Aspartate--ammonia ligase from Clostridium perfringens (strain 13 / Type A).